The following is a 453-amino-acid chain: tRNA modification GTPase MnmE (453 aa).

Positions 22, 79, and 119 each coordinate (6S)-5-formyl-5,6,7,8-tetrahydrofolate. Residues 215–376 form the TrmE-type G domain; sequence GMKVVIAGRP…LKQHLKSLMG (162 aa). Asn-225 contacts K(+). Residues 225–230, 244–250, 269–272, and 334–337 contribute to the GTP site; these read NAGKSS, TEIAGTT, DTAG, and NKAD. Residue Ser-229 coordinates Mg(2+). Residues Thr-244, Ile-246, and Thr-249 each coordinate K(+). Thr-250 serves as a coordination point for Mg(2+). Residue Lys-453 coordinates (6S)-5-formyl-5,6,7,8-tetrahydrofolate.

Belongs to the TRAFAC class TrmE-Era-EngA-EngB-Septin-like GTPase superfamily. TrmE GTPase family. As to quaternary structure, homodimer. Heterotetramer of two MnmE and two MnmG subunits. K(+) is required as a cofactor.

Its subcellular location is the cytoplasm. Exhibits a very high intrinsic GTPase hydrolysis rate. Involved in the addition of a carboxymethylaminomethyl (cmnm) group at the wobble position (U34) of certain tRNAs, forming tRNA-cmnm(5)s(2)U34. The polypeptide is tRNA modification GTPase MnmE (Shewanella baltica (strain OS185)).